The primary structure comprises 226 residues: tRNA (guanine-N(1)-)-methyltransferase (226 aa).

Residues Gly112 and 132–137 (IGDYVL) each bind S-adenosyl-L-methionine.

This sequence belongs to the RNA methyltransferase TrmD family. As to quaternary structure, homodimer.

The protein resides in the cytoplasm. It catalyses the reaction guanosine(37) in tRNA + S-adenosyl-L-methionine = N(1)-methylguanosine(37) in tRNA + S-adenosyl-L-homocysteine + H(+). In terms of biological role, specifically methylates guanosine-37 in various tRNAs. This is tRNA (guanine-N(1)-)-methyltransferase from Christiangramia forsetii (strain DSM 17595 / CGMCC 1.15422 / KT0803) (Gramella forsetii).